The primary structure comprises 338 residues: Glycerol-3-phosphate dehydrogenase [NAD(P)+] (338 aa).

NADPH contacts are provided by serine 13, tryptophan 14, and lysine 108. Positions 108, 139, and 141 each coordinate sn-glycerol 3-phosphate. Alanine 143 is an NADPH binding site. Residues lysine 194, aspartate 247, serine 257, arginine 258, and asparagine 259 each coordinate sn-glycerol 3-phosphate. Lysine 194 (proton acceptor) is an active-site residue. Arginine 258 contributes to the NADPH binding site. NADPH contacts are provided by valine 282 and glutamate 284.

This sequence belongs to the NAD-dependent glycerol-3-phosphate dehydrogenase family.

Its subcellular location is the cytoplasm. It carries out the reaction sn-glycerol 3-phosphate + NAD(+) = dihydroxyacetone phosphate + NADH + H(+). The catalysed reaction is sn-glycerol 3-phosphate + NADP(+) = dihydroxyacetone phosphate + NADPH + H(+). It functions in the pathway membrane lipid metabolism; glycerophospholipid metabolism. Its function is as follows. Catalyzes the reduction of the glycolytic intermediate dihydroxyacetone phosphate (DHAP) to sn-glycerol 3-phosphate (G3P), the key precursor for phospholipid synthesis. This is Glycerol-3-phosphate dehydrogenase [NAD(P)+] from Streptococcus suis (strain 98HAH33).